The chain runs to 255 residues: Accessory gland-specific peptide 26Aa (255 aa).

Positions 1–18 are cleaved as a signal peptide; sequence MNQILLCSQILLLLFAVA. A disordered region spans residues 86–110; it reads PINNSKSRKNSSTLPSQILTDKPNQ. Positions 87–110 are enriched in polar residues; that stretch reads INNSKSRKNSSTLPSQILTDKPNQ. N-linked (GlcNAc...) asparagine glycans are attached at residues asparagine 88, asparagine 95, and asparagine 136. 2 disordered regions span residues 177–197 and 235–255; these read NAQN…KDIA and NNPA…PSTT. Residues 183–192 are compositionally biased toward basic residues; sequence KPTKSCKKRP. A compositionally biased stretch (polar residues) spans 245–255; that stretch reads KSPSEGNPSTT.

Post-translationally, it undergoes several cleavages as it is secreted and it is further processed in the recipient female. In terms of tissue distribution, main cells of the accessory glands of males.

The protein resides in the secreted. It localises to the extracellular space. This protein is transferred from male to female's hemolymph during mating, affecting egglaying and behavior after mating. The polypeptide is Accessory gland-specific peptide 26Aa (Acp26Aa) (Drosophila simulans (Fruit fly)).